Consider the following 279-residue polypeptide: ESX-1 secretion-associated protein EspG1 (279 aa).

Belongs to the EspG family. In terms of assembly, interacts specifically with ESX-1-dependent PE/PPE proteins.

The protein resides in the cytoplasm. Functionally, specific chaperone for cognate PE/PPE proteins. Plays an important role in preventing aggregation of PE/PPE dimers. The protein is ESX-1 secretion-associated protein EspG1 of Mycobacterium marinum (strain ATCC BAA-535 / M).